Here is a 100-residue protein sequence, read N- to C-terminus: Small ribosomal subunit protein uS14m (100 aa).

Belongs to the universal ribosomal protein uS14 family.

It is found in the mitochondrion. This Vicia faba (Broad bean) protein is Small ribosomal subunit protein uS14m (RPS14).